The sequence spans 493 residues: Glycerol kinase (493 aa).

T12 serves as a coordination point for ADP. 3 residues coordinate ATP: T12, T13, and S14. Sn-glycerol 3-phosphate is bound at residue T12. R16 provides a ligand contact to ADP. 4 residues coordinate sn-glycerol 3-phosphate: R82, E83, Y132, and D239. R82, E83, Y132, D239, and Q240 together coordinate glycerol. ADP is bound by residues T261 and G303. Positions 261, 303, 307, and 402 each coordinate ATP. Residues G402 and N406 each contribute to the ADP site.

It belongs to the FGGY kinase family.

The enzyme catalyses glycerol + ATP = sn-glycerol 3-phosphate + ADP + H(+). Its pathway is polyol metabolism; glycerol degradation via glycerol kinase pathway; sn-glycerol 3-phosphate from glycerol: step 1/1. Functionally, key enzyme in the regulation of glycerol uptake and metabolism. Catalyzes the phosphorylation of glycerol to yield sn-glycerol 3-phosphate. The chain is Glycerol kinase from Thermococcus onnurineus (strain NA1).